The following is a 300-amino-acid chain: MAVVAGLRAFGVKWPSWLRRNPWAPLSAGFCSPGSAGPAGSESEPRLTSTRQQDGIRNIVLSNPRRRNALSLAMLKSLRSDILHEAESEDLKVIIISAEGPVFSSGHDLKELTDAQGRDYHAEVFQTCSEVMMLIRNHPVPILAMVNGLATAAGCQLVASCDIAVASDKSSFATPGVNVGLFCSTPAVALGRAVPRKVALEMLFTGEPISAQEALRHGLISKVVPEEQLEAETMRIAKKISSLSRSVVALGKATFYKQLPQDLRTAYFLASQAMVDNLALQDGQEGIEAFIQKRKPIWSH.

The transit peptide at 1-66 directs the protein to the mitochondrion; that stretch reads MAVVAGLRAF…RNIVLSNPRR (66 aa). The tract at residues 34 to 53 is disordered; it reads GSAGPAGSESEPRLTSTRQQ. K110 bears the N6-succinyllysine mark.

It belongs to the enoyl-CoA hydratase/isomerase family.

The protein localises to the mitochondrion. In terms of biological role, may play a role in fatty acid biosynthesis and insulin sensitivity. The protein is Enoyl-CoA hydratase domain-containing protein 3, mitochondrial of Mus musculus (Mouse).